Consider the following 253-residue polypeptide: CD151 antigen (253 aa).

The Cytoplasmic portion of the chain corresponds to 1-18 (MGEFNEKKTTCGTVCLKY). S-palmitoyl cysteine attachment occurs at residues Cys-11 and Cys-15. A helical transmembrane segment spans residues 19 to 39 (LLFTYNCCFWLAGLAVMAVGI). Residues 40-57 (WTLALKSDYISLLASGTY) lie on the Extracellular side of the membrane. The chain crosses the membrane as a helical span at residues 58–78 (LATAYILVVAGAVVMVTGVLG). The Cytoplasmic segment spans residues 79–91 (CCATFKERRNLLR). Residues 92 to 112 (LYFILLLIIFLLEIIAGVLAY) traverse the membrane as a helical segment. Residues 113 to 221 (VYYQQLNTEL…LETFIQEHLR (109 aa)) lie on the Extracellular side of the membrane. Asn-159 carries an N-linked (GlcNAc...) asparagine glycan. The chain crosses the membrane as a helical span at residues 222 to 242 (VIGAVGTGIACVQVFGMIFTC). 2 S-palmitoyl cysteine lipidation sites follow: Cys-242 and Cys-243. Residues 243–253 (CLYRSLKLEHY) lie on the Cytoplasmic side of the membrane.

It belongs to the tetraspanin (TM4SF) family. As to quaternary structure, interacts with integrins ITGA3:ITGB1, ITGA5:ITGB1, ITGA3:ITGB1 and ITGA6:ITGB4 and with CD9 and CD181. Interacts (via the second extracellular domain) with integrin ITGAV:ITGB3. Interacts with ITGA3; this interaction modulates ITGA3 glycosylation pattern. Interacts with F11R. Interacts with RAC1 and CDC42; these interactions mediate physical association of RAC1 and CDC42 with integrin adhesion receptor complexes. In terms of processing, palmitoylated. Palmitoylation by ZDHHC2 regulates CD151 expression, association with other tetraspanin family proteins and function in cell adhesion. Ubiquitinated by RNF128 on lysine residues present in the tetraspanin amino terminus via 'Lys-48'-linked ubiquitin leading to proteasomal degradation.

The protein localises to the cell membrane. Functionally, structural component of specialized membrane microdomains known as tetraspanin-enriched microdomains (TERMs), which act as platforms for receptor clustering and signaling. Plays a role in various cellular and molecular mechanism through its association with both integrin and non-integrin proteins. These interactions facilitate critical cellular functions, including cell-to-cell communication, wound healing, platelet aggregation, trafficking, cell motility, and angiogenesis. Via interaction with JAM-A/F11R and integrin ITGA3:ITGB1, promotes the recruitment of signaling molecules such as RAC1, CDC42 and RhoGTPases to facilitate the polarization of epithelial cells and the reorganization of the actin cytoskeleton, which are critical steps in cell migration process. Regulates the glycosylation pattern of ITGA3:ITGB1 thereby modulating its activity. Plays an essential role in the maintenance of central laminin-binding integrin ITGA6:ITGB4-containing adhesion complexes. Essential for the proper assembly of the glomerular and tubular basement membranes in kidney. Contributes to T-cell activation by modulating integrin signaling leading to activation of downstream targets PTK2 and MAPK1/MAPK3. The polypeptide is CD151 antigen (CD151) (Chlorocebus aethiops (Green monkey)).